The sequence spans 267 residues: tRNA pseudouridine synthase A (267 aa).

Asp53 acts as the Nucleophile in catalysis. Position 114 (Tyr114) interacts with substrate.

It belongs to the tRNA pseudouridine synthase TruA family. In terms of assembly, homodimer.

It carries out the reaction uridine(38/39/40) in tRNA = pseudouridine(38/39/40) in tRNA. In terms of biological role, formation of pseudouridine at positions 38, 39 and 40 in the anticodon stem and loop of transfer RNAs. This is tRNA pseudouridine synthase A from Chlamydia trachomatis serovar A (strain ATCC VR-571B / DSM 19440 / HAR-13).